A 158-amino-acid polypeptide reads, in one-letter code: Naphthalene 1,2-dioxygenase system, small oxygenase component (158 aa).

Belongs to the bacterial ring-hydroxylating dioxygenase beta subunit family. The naphthalene dioxygenase (NDO) multicomponent enzyme system is composed of an electron transfer component and a dioxygenase component (iron sulfur protein (ISP)). The electron transfer component is composed of a ferredoxin reductase (NdoR) and a ferredoxin (NdoA), and the dioxygenase component is formed of a heterohexamer (trimer of heterodimers) of three large alpha subunits (NdoB) and three small beta subunits (NdoC).

It participates in aromatic compound metabolism; naphthalene degradation. Its function is as follows. Component of the naphthalene dioxygenase (NDO) multicomponent enzyme system which catalyzes the incorporation of both atoms of molecular oxygen into naphthalene to form cis-(1R,2S)-dihydroxy-1,2-dihydronaphthalene. The beta subunit seems to have a structural role in the holoenzyme. The sequence is that of Naphthalene 1,2-dioxygenase system, small oxygenase component from Pseudomonas fluorescens.